The chain runs to 547 residues: Chaperonin GroEL (547 aa).

Residues 30-33 (TLGP), Lys51, 87-91 (DGTTT), Gly415, and Asp495 contribute to the ATP site.

Belongs to the chaperonin (HSP60) family. As to quaternary structure, forms a cylinder of 14 subunits composed of two heptameric rings stacked back-to-back. Interacts with the co-chaperonin GroES.

Its subcellular location is the cytoplasm. It carries out the reaction ATP + H2O + a folded polypeptide = ADP + phosphate + an unfolded polypeptide.. Its function is as follows. Together with its co-chaperonin GroES, plays an essential role in assisting protein folding. The GroEL-GroES system forms a nano-cage that allows encapsulation of the non-native substrate proteins and provides a physical environment optimized to promote and accelerate protein folding. The sequence is that of Chaperonin GroEL from Thiobacillus denitrificans (strain ATCC 25259 / T1).